The chain runs to 382 residues: Anhydro-N-acetylmuramic acid kinase (382 aa).

ATP is bound at residue 22–29 (GTSMDGVD).

Belongs to the anhydro-N-acetylmuramic acid kinase family.

It catalyses the reaction 1,6-anhydro-N-acetyl-beta-muramate + ATP + H2O = N-acetyl-D-muramate 6-phosphate + ADP + H(+). The protein operates within amino-sugar metabolism; 1,6-anhydro-N-acetylmuramate degradation. It functions in the pathway cell wall biogenesis; peptidoglycan recycling. Its function is as follows. Catalyzes the specific phosphorylation of 1,6-anhydro-N-acetylmuramic acid (anhMurNAc) with the simultaneous cleavage of the 1,6-anhydro ring, generating MurNAc-6-P. Is required for the utilization of anhMurNAc either imported from the medium or derived from its own cell wall murein, and thus plays a role in cell wall recycling. The protein is Anhydro-N-acetylmuramic acid kinase of Burkholderia orbicola (strain AU 1054).